The sequence spans 481 residues: Glutamyl-tRNA(Gln) amidotransferase subunit A (481 aa).

Catalysis depends on charge relay system residues Lys76 and Ser151. The active-site Acyl-ester intermediate is Ser175.

This sequence belongs to the amidase family. GatA subfamily. In terms of assembly, heterotrimer of A, B and C subunits.

The catalysed reaction is L-glutamyl-tRNA(Gln) + L-glutamine + ATP + H2O = L-glutaminyl-tRNA(Gln) + L-glutamate + ADP + phosphate + H(+). In terms of biological role, allows the formation of correctly charged Gln-tRNA(Gln) through the transamidation of misacylated Glu-tRNA(Gln) in organisms which lack glutaminyl-tRNA synthetase. The reaction takes place in the presence of glutamine and ATP through an activated gamma-phospho-Glu-tRNA(Gln). The chain is Glutamyl-tRNA(Gln) amidotransferase subunit A from Chlorobaculum parvum (strain DSM 263 / NCIMB 8327) (Chlorobium vibrioforme subsp. thiosulfatophilum).